A 448-amino-acid chain; its full sequence is UDP-N-acetylmuramoyl-L-alanine--L-glutamate ligase (448 aa).

118–124 (GSKGKST) is a binding site for ATP.

The protein belongs to the MurCDEF family. MurD2 subfamily.

The protein resides in the cytoplasm. It carries out the reaction UDP-N-acetyl-alpha-D-muramoyl-L-alanine + L-glutamate + ATP = UDP-N-acetyl-alpha-D-muramoyl-L-alanyl-L-glutamate + ADP + phosphate + H(+). It participates in cell wall biogenesis; peptidoglycan biosynthesis. Cell wall formation. Catalyzes the addition of L-glutamate to the nucleotide precursor UDP-N-acetylmuramoyl-L-alanine. This Salinispora tropica (strain ATCC BAA-916 / DSM 44818 / JCM 13857 / NBRC 105044 / CNB-440) protein is UDP-N-acetylmuramoyl-L-alanine--L-glutamate ligase.